Consider the following 282-residue polypeptide: uncharacterized protein (282 aa).

The region spanning 1–77 is the HTH rpiR-type domain; it reads MNGLLRIRQR…LALSEALASQ (77 aa). Positions 37-56 form a DNA-binding region, H-T-H motif; that stretch reads SQQLANEAGVSQSSVVKFAQ. An SIS domain is found at 125-265; sequence CVTMLRSARR…FIALIQQDLE (141 aa).

This is an uncharacterized protein from Escherichia coli (strain K12).